The chain runs to 411 residues: Arginine deiminase 1 (411 aa).

The active-site Amidino-cysteine intermediate is cysteine 401.

The protein belongs to the arginine deiminase family.

Its subcellular location is the cytoplasm. The enzyme catalyses L-arginine + H2O = L-citrulline + NH4(+). The protein operates within amino-acid degradation; L-arginine degradation via ADI pathway; carbamoyl phosphate from L-arginine: step 1/2. The chain is Arginine deiminase 1 (arcA1) from Staphylococcus epidermidis (strain ATCC 12228 / FDA PCI 1200).